The chain runs to 212 residues: Imidazole glycerol phosphate synthase subunit HisH (212 aa).

Positions Asp-3–Pro-212 constitute a Glutamine amidotransferase type-1 domain. Catalysis depends on Cys-82, which acts as the Nucleophile. Catalysis depends on residues His-192 and Glu-194.

In terms of assembly, heterodimer of HisH and HisF.

It localises to the cytoplasm. The enzyme catalyses 5-[(5-phospho-1-deoxy-D-ribulos-1-ylimino)methylamino]-1-(5-phospho-beta-D-ribosyl)imidazole-4-carboxamide + L-glutamine = D-erythro-1-(imidazol-4-yl)glycerol 3-phosphate + 5-amino-1-(5-phospho-beta-D-ribosyl)imidazole-4-carboxamide + L-glutamate + H(+). It catalyses the reaction L-glutamine + H2O = L-glutamate + NH4(+). Its pathway is amino-acid biosynthesis; L-histidine biosynthesis; L-histidine from 5-phospho-alpha-D-ribose 1-diphosphate: step 5/9. Functionally, IGPS catalyzes the conversion of PRFAR and glutamine to IGP, AICAR and glutamate. The HisH subunit catalyzes the hydrolysis of glutamine to glutamate and ammonia as part of the synthesis of IGP and AICAR. The resulting ammonia molecule is channeled to the active site of HisF. The protein is Imidazole glycerol phosphate synthase subunit HisH of Aromatoleum aromaticum (strain DSM 19018 / LMG 30748 / EbN1) (Azoarcus sp. (strain EbN1)).